Reading from the N-terminus, the 237-residue chain is Orotidine 5'-phosphate decarboxylase (237 aa).

Substrate is bound by residues D11, K34, D61 to T70, T124, R186, Q195, G215, and R216. The active-site Proton donor is K63.

It belongs to the OMP decarboxylase family. Type 1 subfamily. In terms of assembly, homodimer.

The catalysed reaction is orotidine 5'-phosphate + H(+) = UMP + CO2. It functions in the pathway pyrimidine metabolism; UMP biosynthesis via de novo pathway; UMP from orotate: step 2/2. In terms of biological role, catalyzes the decarboxylation of orotidine 5'-monophosphate (OMP) to uridine 5'-monophosphate (UMP). This Lactococcus lactis subsp. cremoris (strain MG1363) protein is Orotidine 5'-phosphate decarboxylase.